Reading from the N-terminus, the 196-residue chain is C-type lectin domain family 3 member A (196 aa).

An N-terminal signal peptide occupies residues 1–22; sequence MAKNGLVLCILVVSLLLDQTDG. Cystine bridges form between C68–C78, C95–C191, and C167–C183. In terms of domain architecture, C-type lectin spans 74 to 192; the sequence is VHKKCYLASE…CRSSKRYICE (119 aa).

Its subcellular location is the secreted. Its function is as follows. Promotes cell adhesion to laminin and fibronectin. This chain is C-type lectin domain family 3 member A (Clec3a), found in Mus musculus (Mouse).